Here is a 404-residue protein sequence, read N- to C-terminus: Tryptophan synthase beta chain (404 aa).

The residue at position 98 (K98) is an N6-(pyridoxal phosphate)lysine.

The protein belongs to the TrpB family. Tetramer of two alpha and two beta chains. The cofactor is pyridoxal 5'-phosphate.

The enzyme catalyses (1S,2R)-1-C-(indol-3-yl)glycerol 3-phosphate + L-serine = D-glyceraldehyde 3-phosphate + L-tryptophan + H2O. Its pathway is amino-acid biosynthesis; L-tryptophan biosynthesis; L-tryptophan from chorismate: step 5/5. Functionally, the beta subunit is responsible for the synthesis of L-tryptophan from indole and L-serine. The sequence is that of Tryptophan synthase beta chain from Rhodopseudomonas palustris (strain HaA2).